We begin with the raw amino-acid sequence, 547 residues long: Chaperonin GroEL (547 aa).

Residues 30–33 (TLGP), K51, 87–91 (DGTTT), G415, and D496 each bind ATP.

Belongs to the chaperonin (HSP60) family. Forms a cylinder of 14 subunits composed of two heptameric rings stacked back-to-back. Interacts with the co-chaperonin GroES.

It is found in the cytoplasm. It carries out the reaction ATP + H2O + a folded polypeptide = ADP + phosphate + an unfolded polypeptide.. Its function is as follows. Together with its co-chaperonin GroES, plays an essential role in assisting protein folding. The GroEL-GroES system forms a nano-cage that allows encapsulation of the non-native substrate proteins and provides a physical environment optimized to promote and accelerate protein folding. The protein is Chaperonin GroEL of Chlorobium phaeobacteroides (strain DSM 266 / SMG 266 / 2430).